Here is a 320-residue protein sequence, read N- to C-terminus: Zinc finger protein 330 (320 aa).

Residues 1-23 (MPKKKTGARKKAENRREREKQLR) are disordered. The Nuclear localization signal signature appears at 3–11 (KKKTGARKK). Residues 10 to 22 (KKAENRREREKQL) show a composition bias toward basic and acidic residues. 4 C4-type zinc fingers span residues 42–58 (CDKC…CYFC), 67–104 (CAQC…CDFC), 129–149 (CVEC…CSFC), and 175–189 (CVSC…CLRC). Positions 206–320 (EKGKQPPCPK…GYAHYEEQEN (115 aa)) are disordered. Residues 216–225 (CGHETQETKD) show a composition bias toward basic and acidic residues. A compositionally biased stretch (acidic residues) spans 269-285 (DEEEDEYEAEDDEEEED). Residue Ser291 is modified to Phosphoserine.

This sequence belongs to the NOA36 family. Widely expressed. Higher expression seen in heart and skeletal muscle.

It is found in the nucleus. The protein localises to the nucleolus. The protein resides in the chromosome. Its subcellular location is the centromere. The sequence is that of Zinc finger protein 330 (ZNF330) from Homo sapiens (Human).